Here is a 743-residue protein sequence, read N- to C-terminus: Neutral ceramidase (743 aa).

Residues 1–14 (MASKSRRLSGLEIS) lie on the Cytoplasmic side of the membrane. The helical; Signal-anchor for type II membrane protein transmembrane segment at 15 to 35 (LIVLFLLMTAVSVALITVLAL) threads the bilayer. Residues 36–743 (KQESDKKEEV…FKVARSFYYF (708 aa)) lie on the Lumenal side of the membrane. The tract at residues 40-60 (DKKEEVTPEEPSPSVTPPEKP) is disordered. Pro residues predominate over residues 49–59 (EPSPSVTPPEK). Positions 151 and 260 each coordinate Zn(2+). Asparagine 265 carries an N-linked (GlcNAc...) asparagine glycan. The Nucleophile role is filled by serine 312. 2 cysteine pairs are disulfide-bonded: cysteine 320–cysteine 334 and cysteine 327–cysteine 342. 4 N-linked (GlcNAc...) asparagine glycosylation sites follow: asparagine 331, asparagine 389, asparagine 398, and asparagine 451. Cysteine 406 and cysteine 456 are disulfide-bonded. Glutamate 498 and tyrosine 538 together coordinate Zn(2+). Residue asparagine 661 is glycosylated (N-linked (GlcNAc...) asparagine). Aspartate 672, serine 674, and threonine 677 together coordinate Ca(2+). N-linked (GlcNAc...) asparagine glycosylation is present at asparagine 720.

It belongs to the neutral ceramidase family. It depends on Zn(2+) as a cofactor. N-glycosylated. Post-translationally, O-glycosylated. As to expression, detected in intestine (at protein level).

The protein resides in the cell membrane. It localises to the membrane raft. It is found in the membrane. The protein localises to the caveola. Its subcellular location is the golgi apparatus membrane. The protein resides in the mitochondrion. It localises to the secreted. It is found in the extracellular exosome. The catalysed reaction is an N-acylsphing-4-enine + H2O = sphing-4-enine + a fatty acid. The enzyme catalyses N-dodecanoylsphing-4-enine + H2O = dodecanoate + sphing-4-enine. It participates in lipid metabolism; sphingolipid metabolism. In terms of biological role, plasma membrane ceramidase that hydrolyzes sphingolipid ceramides into sphingosine and free fatty acids at neutral pH. Ceramides, sphingosine, and its phosphorylated form sphingosine-1-phosphate are bioactive lipids that mediate cellular signaling pathways regulating several biological processes including cell proliferation, apoptosis and differentiation. Also catalyzes the reverse reaction allowing the synthesis of ceramides from fatty acids and sphingosine. Together with sphingomyelinase, participates in the production of sphingosine and sphingosine-1-phosphate from the degradation of sphingomyelin, a sphingolipid enriched in the plasma membrane of cells. Also participates in the hydrolysis of ceramides from the extracellular milieu allowing the production of sphingosine-1-phosphate inside and outside cells. This is Neutral ceramidase (asah2) from Danio rerio (Zebrafish).